A 465-amino-acid polypeptide reads, in one-letter code: 3-isopropylmalate dehydratase large subunit (465 aa).

[4Fe-4S] cluster contacts are provided by C347, C407, and C410. The segment at 416–443 (DTLRPGERSASTSNRNFEGRQGPGGRTH) is disordered.

This sequence belongs to the aconitase/IPM isomerase family. LeuC type 1 subfamily. In terms of assembly, heterodimer of LeuC and LeuD. It depends on [4Fe-4S] cluster as a cofactor.

It catalyses the reaction (2R,3S)-3-isopropylmalate = (2S)-2-isopropylmalate. It participates in amino-acid biosynthesis; L-leucine biosynthesis; L-leucine from 3-methyl-2-oxobutanoate: step 2/4. Catalyzes the isomerization between 2-isopropylmalate and 3-isopropylmalate, via the formation of 2-isopropylmaleate. The protein is 3-isopropylmalate dehydratase large subunit of Frankia alni (strain DSM 45986 / CECT 9034 / ACN14a).